The chain runs to 417 residues: WAT1-related protein At3g02690, chloroplastic (417 aa).

Residues 1 to 68 (MEWPWSAIAA…RRINGDSVVR (68 aa)) constitute a chloroplast transit peptide. The interval 67 to 92 (VRRSTTSNNSTEETESSSSSSSVDCV) is disordered. A compositionally biased stretch (low complexity) spans 68 to 89 (RRSTTSNNSTEETESSSSSSSV). Transmembrane regions (helical) follow at residues 122–142 (FLEWTVLISPFFFWGTAMVAM), 152–172 (FFVAAFRLIPAGLLLVAFAVY), 183–203 (AWFSIALFALVDATCFQGFLA), 213–233 (LGSVIIDSQPLTVAVLASFLF), 237–257 (IGIVRAGGLLLGVAGLLLLEV), 269–289 (LWGSGEWWMLLAAQSMAIGTV), 301–321 (IMATGWHMVIGGLPLLAISVI), 339–359 (VIALLYTSIFGSAVSYGVYFY), 369–389 (LSSLTFLTPMFASIFGYLYLN), and 392–412 (FSSLQLVGAAVTLVAIYLVNF). 2 consecutive EamA domains span residues 133-255 (FFWG…LLLL) and 283-411 (SMAI…YLVN).

The protein belongs to the drug/metabolite transporter (DMT) superfamily. Plant drug/metabolite exporter (P-DME) (TC 2.A.7.4) family.

The protein localises to the plastid. Its subcellular location is the chloroplast membrane. The sequence is that of WAT1-related protein At3g02690, chloroplastic from Arabidopsis thaliana (Mouse-ear cress).